Here is a 437-residue protein sequence, read N- to C-terminus: Interactor protein for cytohesin exchange factors 1 (437 aa).

Residues 41–140 (HADCQGWLYK…WLNKLGSAVI (100 aa)) form the PH domain. Disordered regions lie at residues 143–225 (ESTT…PDTV) and 273–307 (LSSDDTSSLSSNHDHLTVPDKPAGSKIMDKEETKV). A compositionally biased stretch (acidic residues) spans 151 to 162 (CYSESEQEDPEI). Residues 172-200 (ASQTQSLTAQQASSSSPSLSGTSYSFSSL) are compositionally biased toward low complexity. Over residues 201–214 (ENTVKTPSSFPSSL) the composition is skewed to polar residues. The segment covering 273–283 (LSSDDTSSLSS) has biased composition (low complexity). 2 CRAC domain regions span residues 315–320 (KLYKSL) and 339–348 (LRKSFVKRCK). The interval 389 to 437 (KYREWKVMNTLLIQDIYQQQRASPAPDDTDDTPQELKKSPSSPSVENSI) is required for interaction with CYTH2. The segment at 406–437 (QQQRASPAPDDTDDTPQELKKSPSSPSVENSI) is disordered. At Ser-411 the chain carries Phosphoserine. The segment covering 427-437 (SPSSPSVENSI) has biased composition (polar residues).

As to quaternary structure, interacts with guanine-nucleotide exchange factors PSCD1, PSCD2, PSCD3 and PSCD4. Interacts (via C-terminus) with cytohesin-2 CYTH2.

The protein resides in the cytoplasm. Its subcellular location is the cell membrane. Functionally, enhances the promotion of guanine-nucleotide exchange by PSCD2 on ARF6 in a concentration-dependent manner. The sequence is that of Interactor protein for cytohesin exchange factors 1 (IPCEF1) from Homo sapiens (Human).